Consider the following 1236-residue polypeptide: Chitinase-like protein PB1E7.04c (1236 aa).

An N-terminal signal peptide occupies residues 1–19 (MRLISSLLLLVYSARLALS). 11 N-linked (GlcNAc...) asparagine glycosylation sites follow: asparagine 21, asparagine 24, asparagine 54, asparagine 123, asparagine 225, asparagine 237, asparagine 255, asparagine 267, asparagine 277, asparagine 288, and asparagine 309. The GH18 domain occupies 26 to 325 (TAVLGYWGSN…EAIHKILDTK (300 aa)). 3 disordered regions span residues 326 to 367 (SKHS…TSSA), 449 to 497 (VSSI…QSTL), and 584 to 625 (TSSP…STIL). The span at 339 to 351 (QGLESTSSIALNP) shows a compositional bias: polar residues. The span at 352–367 (TSSISSTSSSSSTSSA) shows a compositional bias: low complexity. N-linked (GlcNAc...) asparagine glycosylation is found at asparagine 715, asparagine 737, asparagine 768, asparagine 786, and asparagine 813. Disordered regions lie at residues 804–836 (ISTS…LAAN), 868–927 (TTAL…TSSS), 946–979 (TPTS…SSIA), and 1125–1159 (AASG…TPSN). Over residues 810–821 (NEYNTSFHAPTV) the composition is skewed to polar residues. Positions 822 to 832 (SSTTSSSSTTS) are enriched in low complexity. Over residues 1125-1156 (AASGSSTVTSSATASSSSSAATTADSSVTTDT) the composition is skewed to low complexity.

The protein belongs to the glycosyl hydrolase 18 family. Chitinase class III subfamily.

It localises to the secreted. The chain is Chitinase-like protein PB1E7.04c from Schizosaccharomyces pombe (strain 972 / ATCC 24843) (Fission yeast).